Here is a 288-residue protein sequence, read N- to C-terminus: Glutamate racemase (288 aa).

Substrate-binding positions include 10–11 and 42–43; these read DS and YG. Cys-73 acts as the Proton donor/acceptor in catalysis. Substrate is bound at residue 74 to 75; that stretch reads NT. Cys-184 functions as the Proton donor/acceptor in the catalytic mechanism. A substrate-binding site is contributed by 185 to 186; sequence TH.

The protein belongs to the aspartate/glutamate racemases family.

It catalyses the reaction L-glutamate = D-glutamate. The protein operates within cell wall biogenesis; peptidoglycan biosynthesis. Functionally, provides the (R)-glutamate required for cell wall biosynthesis. In Corynebacterium kroppenstedtii (strain DSM 44385 / JCM 11950 / CIP 105744 / CCUG 35717), this protein is Glutamate racemase.